The chain runs to 524 residues: Translation initiation factor eIF2B subunit delta (524 aa).

The segment at 1–174 (MAAVAVAVRE…RQQVPTRKDY (174 aa)) is disordered. The residue at position 2 (alanine 2) is an N-acetylalanine. 2 stretches are compositionally biased toward basic and acidic residues: residues 8 to 20 (VREESRSEMKTEL) and 31 to 40 (LTQEEKLQLR). Residue serine 12 is modified to Phosphoserine. Positions 41 to 51 (KEKKQQKKKRK) are enriched in basic residues. Threonine 86 carries the phosphothreonine modification. Basic and acidic residues-rich tracts occupy residues 96–121 (SKAELRAERRAKQEAERALKQARKGE) and 161–174 (RKPDRQQVPTRKDY). Positions 171–180 (RKDYGSKVSL) are may bind the chemical integrated stress response (ISR) inhibitor ISRIB.

This sequence belongs to the eIF-2B alpha/beta/delta subunits family. In terms of assembly, component of the translation initiation factor 2B (eIF2B) complex which is a heterodecamer of two sets of five different subunits: alpha, beta, gamma, delta and epsilon. Subunits alpha, beta and delta comprise a regulatory subcomplex and subunits epsilon and gamma comprise a catalytic subcomplex. Within the complex, the hexameric regulatory complex resides at the center, with the two heterodimeric catalytic subcomplexes bound on opposite sides.

The protein localises to the cytoplasm. It is found in the cytosol. Its activity is regulated as follows. Activated by the chemical integrated stress response (ISR) inhibitor ISRIB which stimulates guanine nucleotide exchange factor activity for both phosphorylated and unphosphorylated eIF2. Its function is as follows. Acts as a component of the translation initiation factor 2B (eIF2B) complex, which catalyzes the exchange of GDP for GTP on eukaryotic initiation factor 2 (eIF2) gamma subunit. Its guanine nucleotide exchange factor activity is repressed when bound to eIF2 complex phosphorylated on the alpha subunit, thereby limiting the amount of methionyl-initiator methionine tRNA available to the ribosome and consequently global translation is repressed. The chain is Translation initiation factor eIF2B subunit delta (Eif2b4) from Rattus norvegicus (Rat).